The sequence spans 994 residues: Phosphoenolpyruvate carboxylase (994 aa).

Positions 1–66 are disordered; the sequence is MKSSGSARAT…QGRTREDKDR (66 aa). Composition is skewed to low complexity over residues 14–25 and 41–54; these read AVSSSSAPAHAE and AAARPLAPTNAASA. Residues H204 and K646 contribute to the active site.

Belongs to the PEPCase type 1 family. Mg(2+) serves as cofactor.

The catalysed reaction is oxaloacetate + phosphate = phosphoenolpyruvate + hydrogencarbonate. In terms of biological role, forms oxaloacetate, a four-carbon dicarboxylic acid source for the tricarboxylic acid cycle. In Burkholderia pseudomallei (strain 668), this protein is Phosphoenolpyruvate carboxylase.